Consider the following 407-residue polypeptide: E3 ubiquitin-protein ligase TRIM13 (407 aa).

Residues 10 to 58 (CPICCSLFDDPRVLPCSHNFCKKCLEGLLEGNVRNSLWRPSPFKCPTCR) form an RING-type zinc finger. A B box-type zinc finger spans residues 89–131 (PKMPVCKGHLGQPLNIFCVTDMQLICGICATRGEHTKHVFSSI). Zn(2+)-binding residues include Cys94, His97, Cys117, and His123. The stretch at 172-200 (LQLLTKDSDKVKEFFEKLQHTLDQKKNEI) forms a coiled coil. A helical transmembrane segment spans residues 316 to 336 (LLLMMVVLLGLLIFFGPTVFL).

Belongs to the TRIM/RBCC family. Interacts (via C-terminal domain) with VCP. Interacts with AKT1; the interaction ubiquitinates AKT1 and leads to its proteasomal degradation. Interacts with MDM2; the interaction ubiquitinates AKT1 and leads to its proteasomal degradation. Interacts with p62/SQSTM1. Interacts with TRAF6. Interacts with IKBKG/NEMO. Post-translationally, auto-ubiquitinated; requires the RING-type zinc finger. Auto-polyubiquitination leads to proteasomal degradation.

It is found in the endoplasmic reticulum membrane. It carries out the reaction S-ubiquitinyl-[E2 ubiquitin-conjugating enzyme]-L-cysteine + [acceptor protein]-L-lysine = [E2 ubiquitin-conjugating enzyme]-L-cysteine + N(6)-ubiquitinyl-[acceptor protein]-L-lysine.. It participates in protein modification; protein ubiquitination. Its function is as follows. Endoplasmic reticulum (ER) membrane anchored E3 ligase involved in the retrotranslocation and turnover of membrane and secretory proteins from the ER through a set of processes named ER-associated degradation (ERAD). This process acts on misfolded proteins as well as in the regulated degradation of correctly folded proteins. Enhances ionizing radiation-induced p53/TP53 stability and apoptosis via ubiquitinating MDM2 and AKT1 and decreasing AKT1 kinase activity through MDM2 and AKT1 proteasomal degradation. Regulates ER stress-induced autophagy, and may act as a tumor suppressor. Also plays a role in innate immune response by stimulating NF-kappa-B activity in the TLR2 signaling pathway. Ubiquitinates TRAF6 via the 'Lys-29'-linked polyubiquitination chain resulting in NF-kappa-B activation. Participates as well in T-cell receptor-mediated NF-kappa-B activation. In the presence of TNF, modulates the IKK complex by regulating IKBKG/NEMO ubiquitination leading to the repression of NF-kappa-B. The chain is E3 ubiquitin-protein ligase TRIM13 (Trim13) from Mus musculus (Mouse).